The following is a 262-amino-acid chain: Phosphatidylserine decarboxylase proenzyme (262 aa).

Catalysis depends on charge relay system; for autoendoproteolytic cleavage activity residues Asp86, His142, and Ser226. Catalysis depends on Ser226, which acts as the Schiff-base intermediate with substrate; via pyruvic acid; for decarboxylase activity. Pyruvic acid (Ser); by autocatalysis is present on Ser226.

Belongs to the phosphatidylserine decarboxylase family. PSD-B subfamily. Prokaryotic type I sub-subfamily. Heterodimer of a large membrane-associated beta subunit and a small pyruvoyl-containing alpha subunit. Requires pyruvate as cofactor. Post-translationally, is synthesized initially as an inactive proenzyme. Formation of the active enzyme involves a self-maturation process in which the active site pyruvoyl group is generated from an internal serine residue via an autocatalytic post-translational modification. Two non-identical subunits are generated from the proenzyme in this reaction, and the pyruvate is formed at the N-terminus of the alpha chain, which is derived from the carboxyl end of the proenzyme. The autoendoproteolytic cleavage occurs by a canonical serine protease mechanism, in which the side chain hydroxyl group of the serine supplies its oxygen atom to form the C-terminus of the beta chain, while the remainder of the serine residue undergoes an oxidative deamination to produce ammonia and the pyruvoyl prosthetic group on the alpha chain. During this reaction, the Ser that is part of the protease active site of the proenzyme becomes the pyruvoyl prosthetic group, which constitutes an essential element of the active site of the mature decarboxylase.

Its subcellular location is the cell membrane. The catalysed reaction is a 1,2-diacyl-sn-glycero-3-phospho-L-serine + H(+) = a 1,2-diacyl-sn-glycero-3-phosphoethanolamine + CO2. It functions in the pathway phospholipid metabolism; phosphatidylethanolamine biosynthesis; phosphatidylethanolamine from CDP-diacylglycerol: step 2/2. In terms of biological role, catalyzes the formation of phosphatidylethanolamine (PtdEtn) from phosphatidylserine (PtdSer). The polypeptide is Phosphatidylserine decarboxylase proenzyme (Bacillus cereus (strain ZK / E33L)).